The primary structure comprises 215 residues: Large ribosomal subunit protein uL1 (215 aa).

The protein belongs to the universal ribosomal protein uL1 family. Part of the 50S ribosomal subunit.

Binds directly to 23S rRNA. Probably involved in E site tRNA release. Its function is as follows. Protein L1 is also a translational repressor protein, it controls the translation of its operon by binding to its mRNA. This is Large ribosomal subunit protein uL1 from Staphylothermus marinus (strain ATCC 43588 / DSM 3639 / JCM 9404 / F1).